Consider the following 346-residue polypeptide: PhoH-like protein (346 aa).

G142 to T149 is an ATP binding site.

The protein belongs to the PhoH family.

It is found in the cytoplasm. The protein is PhoH-like protein (ybeZ) of Escherichia coli O157:H7.